The sequence spans 128 residues: UPF0325 protein YaeH (128 aa).

The protein belongs to the UPF0325 family.

The polypeptide is UPF0325 protein YaeH (Escherichia coli (strain ATCC 8739 / DSM 1576 / NBRC 3972 / NCIMB 8545 / WDCM 00012 / Crooks)).